The chain runs to 493 residues: GTPase Der (493 aa).

The EngA-type G 1 domain occupies Pro3 to Asn166. GTP is bound by residues Gly9–Ser16, Asp56–Ile60, and Asn118–Asp121. The tract at residues Asn166 to Lys195 is disordered. A compositionally biased stretch (acidic residues) spans Ala167–Glu184. In terms of domain architecture, EngA-type G 2 spans Ile198 to Val371. Residues Gly204–Ser211, Asp251–Val255, and Asn316–Asp319 contribute to the GTP site. One can recognise a KH-like domain in the interval Thr372–Glu456. Residues Gly454–Lys463 show a composition bias toward basic and acidic residues. The tract at residues Gly454–Arg493 is disordered. Positions Val471–Arg493 are enriched in basic residues.

It belongs to the TRAFAC class TrmE-Era-EngA-EngB-Septin-like GTPase superfamily. EngA (Der) GTPase family. Associates with the 50S ribosomal subunit.

GTPase that plays an essential role in the late steps of ribosome biogenesis. This is GTPase Der from Pseudomonas aeruginosa (strain ATCC 15692 / DSM 22644 / CIP 104116 / JCM 14847 / LMG 12228 / 1C / PRS 101 / PAO1).